A 581-amino-acid polypeptide reads, in one-letter code: Serine/threonine-protein kinase PINK1, mitochondrial (581 aa).

Residues 1 to 77 (MAVRQALGRG…RFFRQSVAGL (77 aa)) constitute a mitochondrion transit peptide. Over 78–93 (AARLQRQFVVRAWGCA) the chain is Mitochondrial intermembrane. The helical transmembrane segment at 94–110 (GPCGRAVFLAFGLGLGL) threads the bilayer. Residues 111–117 (IEEKQAE) form a required for outer membrane localization region. The Cytoplasmic portion of the chain corresponds to 111 to 581 (IEEKQAESRR…LLLCSWRAAL (471 aa)). The 356-residue stretch at 156-511 (YLIGQSIGKG…VAANVLHLSL (356 aa)) folds into the Protein kinase domain. Residues 162 to 170 (IGKGCSAAV) and K186 each bind ATP. Positions 189–208 (GLLPGRGPGTSAPGEGQERA) are disordered. S228 is modified (phosphoserine; by autocatalysis). The active-site Proton acceptor is D362. S402 bears the Phosphoserine; by autocatalysis mark.

Belongs to the protein kinase superfamily. Ser/Thr protein kinase family. As to quaternary structure, upon mitochondrial depolarization, it forms a supercomplex with TOM and TIM23 complexes. PINK1-TOM-TIM23 supercomplex formation requires PINK1 interaction with TOMM20 and TOMM70 and is critical for PINK1 stabilization at the outer mitochondrial membrane, kinase activation and downstream mitophagy. Upon mitochondrial depolarization, interacts with TIMM23; the interaction is required for PINK1 accumulation at the outer mitochondrial membrane, kinase activation by autophosphorylation and PRKN recruitement to mitochondria. Interacts with PRKN. Interacts with FBXO7. Forms a complex with PRKN and PARK7. Interacts with NENF. Mg(2+) is required as a cofactor. In terms of processing, proteolytically cleaved. In healthy cells, the precursor is continuously imported into the inner mitochondrial membrane (IMM), where it is proteolytically cleaved by mitochondrial-processing peptidase (MPP) and then undergoes further proteolytic cleavage by PARL or AFG3L2 to give rise to the 52 kDa short form. The 52 kDa short form is then released into the cytosol where it rapidly undergoes proteasome-dependent degradation. In unhealthy cells, when cellular stress conditions lead to the loss of mitochondrial membrane potential, mitochondrial import is impaired leading to the precursor accumulating on the outer mitochondrial membrane (OMM). If accumulation at the OMM fails and it is imported into the depolarized mitochondria, it undergoes cleavage by the IMM protease OMA1, promoting its subsequent degradation by the proteasome. Post-translationally, autophosphorylated. Loss of mitochondrial membrane potential results in the precursor accumulating on the outer mitochondrial membrane (OMM) where it is activated by autophosphorylation. Autophosphorylation at Ser-228 and Ser-402 is sufficient and essential for selective recruitment of PRKN to depolarized mitochondria, via PINK1-dependent phosphorylation of ubiquitin and maybe PRKN. In terms of tissue distribution, highly expressed in heart, skeletal muscle and testis, and at lower levels in brain, placenta, liver, kidney, pancreas, prostate, ovary and small intestine. Present in the embryonic testis from an early stage of development.

The protein localises to the mitochondrion outer membrane. It localises to the mitochondrion inner membrane. Its subcellular location is the cytoplasm. It is found in the cytosol. It carries out the reaction L-seryl-[protein] + ATP = O-phospho-L-seryl-[protein] + ADP + H(+). It catalyses the reaction L-threonyl-[protein] + ATP = O-phospho-L-threonyl-[protein] + ADP + H(+). In terms of biological role, serine/threonine-protein kinase which acts as a sensor of mitochondrial damage and protects against mitochondrial dysfunction during cellular stress. It phosphorylates mitochondrial proteins to coordinate mitochondrial quality control mechanisms that remove and replace dysfunctional mitochondrial components. Depending on the severity of mitochondrial damage, activity ranges from preventing apoptosis and stimulating mitochondrial biogenesis to eliminating severely damaged mitochondria via PINK1-PRKN-dependent mitophagy. When cellular stress results in irreversible mitochondrial damage, PINK1 accumulates at the outer mitochondrial membrane (OMM) where it phosphorylates pre-existing polyubiquitin chains at 'Ser-65', recruits PRKN from the cytosol to the OMM and activates PRKN by phosphorylation at 'Ser-65'; activated PRKN then ubiquinates VDAC1 and other OMM proteins to initiate mitophagy. The PINK1-PRKN pathway also promotes fission of damaged mitochondria through phosphorylation and PRKN-dependent degradation of mitochondrial proteins involved in fission such as MFN2. This prevents the refusion of unhealthy mitochondria with the mitochondrial network or initiates mitochondrial fragmentation facilitating their later engulfment by autophagosomes. Also promotes mitochondrial fission independently of PRKN and ATG7-mediated mitophagy, via the phosphorylation and activation of DNM1L. Regulates motility of damaged mitochondria by promoting the ubiquitination and subsequent degradation of MIRO1 and MIRO2; in motor neurons, this likely inhibits mitochondrial intracellular anterograde transport along the axons which probably increases the chance of the mitochondria undergoing mitophagy in the soma. Required for ubiquinone reduction by mitochondrial complex I by mediating phosphorylation of complex I subunit NDUFA10. Phosphorylates LETM1, positively regulating its mitochondrial calcium transport activity. In Homo sapiens (Human), this protein is Serine/threonine-protein kinase PINK1, mitochondrial (PINK1).